The following is a 439-amino-acid chain: AP-2 complex subunit mu (439 aa).

The MHD domain maps to 172–438 (RNELYIDVVE…LTKAGTYQNR (267 aa)).

The protein belongs to the adaptor complexes medium subunit family. Adaptor protein complex 2 (AP-2) is a heterotetramer composed of two large adaptins (alpha-type and beta-type subunits), a medium adaptin (mu-type subunit AP50) and a small adaptin (sigma-type subunit AP17). Phosphorylated.

The protein localises to the cell membrane. It is found in the membrane. Its subcellular location is the coated pit. Component of the adaptor complexes which link clathrin to receptors in coated vesicles. Clathrin-associated protein complexes are believed to interact with the cytoplasmic tails of membrane proteins, leading to their selection and concentration. AP50 is a subunit of the plasma membrane adaptor. The polypeptide is AP-2 complex subunit mu (apm2) (Dictyostelium discoideum (Social amoeba)).